We begin with the raw amino-acid sequence, 172 residues long: Adenine phosphoribosyltransferase (172 aa).

Belongs to the purine/pyrimidine phosphoribosyltransferase family. In terms of assembly, homodimer.

Its subcellular location is the cytoplasm. The enzyme catalyses AMP + diphosphate = 5-phospho-alpha-D-ribose 1-diphosphate + adenine. It participates in purine metabolism; AMP biosynthesis via salvage pathway; AMP from adenine: step 1/1. Functionally, catalyzes a salvage reaction resulting in the formation of AMP, that is energically less costly than de novo synthesis. In Streptococcus uberis (strain ATCC BAA-854 / 0140J), this protein is Adenine phosphoribosyltransferase.